The sequence spans 381 residues: Probable tRNA sulfurtransferase (381 aa).

The THUMP domain maps to 55-163 (GECLENLNKV…DDEAFIYHEK (109 aa)). ATP is bound by residues 181–182 (LV), Lys-265, Gly-287, and Gln-296.

The protein belongs to the ThiI family.

The protein resides in the cytoplasm. The enzyme catalyses [ThiI sulfur-carrier protein]-S-sulfanyl-L-cysteine + a uridine in tRNA + 2 reduced [2Fe-2S]-[ferredoxin] + ATP + H(+) = [ThiI sulfur-carrier protein]-L-cysteine + a 4-thiouridine in tRNA + 2 oxidized [2Fe-2S]-[ferredoxin] + AMP + diphosphate. The catalysed reaction is [ThiS sulfur-carrier protein]-C-terminal Gly-Gly-AMP + S-sulfanyl-L-cysteinyl-[cysteine desulfurase] + AH2 = [ThiS sulfur-carrier protein]-C-terminal-Gly-aminoethanethioate + L-cysteinyl-[cysteine desulfurase] + A + AMP + 2 H(+). Its pathway is cofactor biosynthesis; thiamine diphosphate biosynthesis. In terms of biological role, catalyzes the ATP-dependent transfer of a sulfur to tRNA to produce 4-thiouridine in position 8 of tRNAs, which functions as a near-UV photosensor. Also catalyzes the transfer of sulfur to the sulfur carrier protein ThiS, forming ThiS-thiocarboxylate. This is a step in the synthesis of thiazole, in the thiamine biosynthesis pathway. The sulfur is donated as persulfide by IscS. This is Probable tRNA sulfurtransferase from Methanobrevibacter smithii (strain ATCC 35061 / DSM 861 / OCM 144 / PS).